Here is a 306-residue protein sequence, read N- to C-terminus: Probable thioesterase atnL (306 aa).

Belongs to the lcsJ thioesterase family.

Its function is as follows. Part of the gene cluster that mediates the biosynthesis of aspercryptins, linear lipopeptides built from six amino acids including 2 highly unusual and nonproteogenic amino acids, 2-amino-octanoic acid (2aoa) and 2-amino-dodecanol (2adol). The core structure of aspercryptins is as follows: Ser/Ala-Thr-Ile/Val-2aoa-Asn-2adol. The first step of aspercryptin biosynthesis is the generation of the fatty acid precursors, octanoic and dodecanoic acids, by the FAS subunits atnF and atnM. The fatty acid precursors are likely transformed into the corresponding alpha-amino fatty acids in three steps. First, they are hydroxylated by the cytochrome P450 monooxygenase atnE, then oxidized to the corresponding alpha-keto acids by the NAD(P)-dependent oxidoreductase atnD, and finally converted to the alpha-amino fatty acids by the PLP-dependent aminotransferases atnH or atnJ. the alpha-amino fatty acids, 2-amino-octanoic and 2-amino-dodecanoic acids, are recognized, activated, and covalently tethered to the NRPS atnA by its fourth and sixth adenylation domains. The second module of atnA is the Thr module and contains an epimerase (E) domain responsible for the epimerization of Thr to D-allo-Thr. Additionally, despite atnA having only one epimerase domain, the first amino acid of aspercryptin A1 is D-Ser, suggesting that serine is either loaded directly as D-Ser on the first module or that the epimerase domain in the threonine module epimerizes both L-Ser and L-Thr. After condensation of the hexapeptide of aspercryptin, the C-terminal reductase (TE) domain might be involved in the reductive release and production of the aldehyde hexapeptide. Further reduction would generate aspercryptins. The variety of aspercryptins produced reflects the flexibility of the atnA NRPS, allowing incorporation of alanine instead of serine, valine for isoleucine, and a C10 fatty amino alcohol instead of the C12 version. AtnB seems to be involved in the selectivity for Ile versus Val by the third module. Moreover, type B, C and D aspercryptins have an additional N-terminal cichorine, acetyl and propionyl group respectively. The sequence is that of Probable thioesterase atnL from Emericella nidulans (strain FGSC A4 / ATCC 38163 / CBS 112.46 / NRRL 194 / M139) (Aspergillus nidulans).